A 209-amino-acid polypeptide reads, in one-letter code: Holliday junction branch migration complex subunit RuvA (209 aa).

The domain I stretch occupies residues 1 to 70; sequence MINYLRGQAI…EEQPLLYGFG (70 aa). The tract at residues 71-149 is domain II; sequence TAPERELFRQ…AWRQLREATT (79 aa). The segment at 150 to 158 is flexible linker; sequence TITAILPAA. The domain III stretch occupies residues 158 to 209; that stretch reads AAILEDVQMTLLALGYSQEEIDRAMAVLSQDALFSKNTQPEDWIKGAINWLG.

It belongs to the RuvA family. In terms of assembly, homotetramer. Forms an RuvA(8)-RuvB(12)-Holliday junction (HJ) complex. HJ DNA is sandwiched between 2 RuvA tetramers; dsDNA enters through RuvA and exits via RuvB. An RuvB hexamer assembles on each DNA strand where it exits the tetramer. Each RuvB hexamer is contacted by two RuvA subunits (via domain III) on 2 adjacent RuvB subunits; this complex drives branch migration. In the full resolvosome a probable DNA-RuvA(4)-RuvB(12)-RuvC(2) complex forms which resolves the HJ.

It is found in the cytoplasm. The RuvA-RuvB-RuvC complex processes Holliday junction (HJ) DNA during genetic recombination and DNA repair, while the RuvA-RuvB complex plays an important role in the rescue of blocked DNA replication forks via replication fork reversal (RFR). RuvA specifically binds to HJ cruciform DNA, conferring on it an open structure. The RuvB hexamer acts as an ATP-dependent pump, pulling dsDNA into and through the RuvAB complex. HJ branch migration allows RuvC to scan DNA until it finds its consensus sequence, where it cleaves and resolves the cruciform DNA. In Microcystis aeruginosa (strain NIES-843 / IAM M-2473), this protein is Holliday junction branch migration complex subunit RuvA.